We begin with the raw amino-acid sequence, 448 residues long: Tubulin alpha chain, nucleomorph (448 aa).

The GTP site is built by Gln-11, Glu-71, Ser-140, Gly-144, Thr-145, Thr-179, Asn-206, and Asn-228. Mg(2+) is bound at residue Glu-71. Glu-254 is a catalytic residue.

This sequence belongs to the tubulin family. Dimer of alpha and beta chains. A typical microtubule is a hollow water-filled tube with an outer diameter of 25 nm and an inner diameter of 15 nM. Alpha-beta heterodimers associate head-to-tail to form protofilaments running lengthwise along the microtubule wall with the beta-tubulin subunit facing the microtubule plus end conferring a structural polarity. Microtubules usually have 13 protofilaments but different protofilament numbers can be found in some organisms and specialized cells. The cofactor is Mg(2+).

It carries out the reaction GTP + H2O = GDP + phosphate + H(+). Its function is as follows. Tubulin is the major constituent of microtubules, a cylinder consisting of laterally associated linear protofilaments composed of alpha- and beta-tubulin heterodimers. Microtubules grow by the addition of GTP-tubulin dimers to the microtubule end, where a stabilizing cap forms. Below the cap, tubulin dimers are in GDP-bound state, owing to GTPase activity of alpha-tubulin. The chain is Tubulin alpha chain, nucleomorph (tubA) from Guillardia theta (Cryptophyte).